The primary structure comprises 203 residues: Acid phosphatase (203 aa).

His-13 serves as the catalytic Tele-phosphohistidine intermediate. Glu-85 acts as the Proton donor/acceptor in catalysis.

Belongs to the phosphoglycerate mutase family. Homodimer.

The enzyme catalyses a phosphate monoester + H2O = an alcohol + phosphate. It catalyses the reaction beta-D-fructose 1,6-bisphosphate + H2O = beta-D-fructose 6-phosphate + phosphate. It participates in carbohydrate biosynthesis; gluconeogenesis. With respect to regulation, in contrast to classical FBPases, is resistant to inhibition by lithium. Phosphatase with a broad specificity. Can dephosphorylate a variety of substrates including phosphorylated sugars like fructose-6-phosphate (F6P). Is able to function in vivo as a fructose-1,6-bisphosphatase (FBPase) and to maintain gluconeogenesis when the classical FBPase GlpX is absent. Shows negligible phosphoglycerate mutase activity. Has no phosphatase activity against 3-phosphoglycerate, 2,3-bisphosphoglycerate, or hydrophobic substrates such as alpha-napthyl phosphate. The sequence is that of Acid phosphatase from Mycobacterium tuberculosis (strain ATCC 25618 / H37Rv).